Reading from the N-terminus, the 300-residue chain is Putative S-adenosyl-L-methionine-dependent methyltransferase MAB_4328c (300 aa).

S-adenosyl-L-methionine-binding positions include Asp-126 and 155–156 (DL).

The protein belongs to the UPF0677 family.

Exhibits S-adenosyl-L-methionine-dependent methyltransferase activity. In Mycobacteroides abscessus (strain ATCC 19977 / DSM 44196 / CCUG 20993 / CIP 104536 / JCM 13569 / NCTC 13031 / TMC 1543 / L948) (Mycobacterium abscessus), this protein is Putative S-adenosyl-L-methionine-dependent methyltransferase MAB_4328c.